Consider the following 242-residue polypeptide: Beta-carotene ketolase (242 aa).

The catalysed reaction is all-trans-beta-carotene + 2 AH2 + 2 O2 = echinenone + 2 A + 3 H2O. It catalyses the reaction echinenone + 2 AH2 + 2 O2 = canthaxanthin + 2 A + 3 H2O. The protein operates within carotenoid biosynthesis; astaxanthin biosynthesis. Functionally, converts beta-carotene to canthaxanthin via echinenone. The polypeptide is Beta-carotene ketolase (crtW) (Paracoccus sp. (strain N81106 / MBIC 01143) (Agrobacterium aurantiacum)).